Reading from the N-terminus, the 353-residue chain is Photosystem II protein D1 (353 aa).

An N-acetylthreonine modification is found at T2. T2 bears the Phosphothreonine mark. The next 3 helical transmembrane spans lie at 29–46 (YIGWFGVLMIPLLLTATS), 118–133 (HFLLGVACYMGREWEL), and 142–156 (WIAVAYSAPVAAATA). H118 is a binding site for chlorophyll a. Y126 lines the pheophytin a pocket. Positions 170 and 189 each coordinate [CaMn4O5] cluster. The chain crosses the membrane as a helical span at residues 197-218 (FHMLGVAGVFGGSLFSAMHGSL). H198 lines the chlorophyll a pocket. A quinone is bound by residues H215 and 264 to 265 (SF). A Fe cation-binding site is contributed by H215. H272 provides a ligand contact to Fe cation. Residues 274 to 288 (FLAAWPVVCIWFTAL) form a helical membrane-spanning segment. 4 residues coordinate [CaMn4O5] cluster: H332, E333, D342, and A344. Positions 345 to 353 (SVDAPAVQG) are excised as a propeptide.

This sequence belongs to the reaction center PufL/M/PsbA/D family. PSII is composed of 1 copy each of membrane proteins PsbA, PsbB, PsbC, PsbD, PsbE, PsbF, PsbH, PsbI, PsbJ, PsbK, PsbL, PsbM, PsbT, PsbX, PsbY, PsbZ, Psb30/Ycf12, at least 3 peripheral proteins of the oxygen-evolving complex and a large number of cofactors. It forms dimeric complexes. Requires The D1/D2 heterodimer binds P680, chlorophylls that are the primary electron donor of PSII, and subsequent electron acceptors. It shares a non-heme iron and each subunit binds pheophytin, quinone, additional chlorophylls, carotenoids and lipids. D1 provides most of the ligands for the Mn4-Ca-O5 cluster of the oxygen-evolving complex (OEC). There is also a Cl(-1) ion associated with D1 and D2, which is required for oxygen evolution. The PSII complex binds additional chlorophylls, carotenoids and specific lipids. as cofactor. In terms of processing, tyr-161 forms a radical intermediate that is referred to as redox-active TyrZ, YZ or Y-Z. C-terminally processed by CTPA; processing is essential to allow assembly of the oxygen-evolving complex and thus photosynthetic growth.

The protein localises to the plastid. The protein resides in the chloroplast thylakoid membrane. The catalysed reaction is 2 a plastoquinone + 4 hnu + 2 H2O = 2 a plastoquinol + O2. Its function is as follows. Photosystem II (PSII) is a light-driven water:plastoquinone oxidoreductase that uses light energy to abstract electrons from H(2)O, generating O(2) and a proton gradient subsequently used for ATP formation. It consists of a core antenna complex that captures photons, and an electron transfer chain that converts photonic excitation into a charge separation. The D1/D2 (PsbA/PsbD) reaction center heterodimer binds P680, the primary electron donor of PSII as well as several subsequent electron acceptors. The protein is Photosystem II protein D1 of Nephroselmis olivacea (Green alga).